A 590-amino-acid polypeptide reads, in one-letter code: Zinc finger protein 285 (590 aa).

In terms of domain architecture, KRAB spans 8 to 86; it reads VTFKDVAVVF…WKQRIRDLTV (79 aa). The C2H2-type 1 zinc finger occupies 232-254; it reads FPCNNCGVAFADDTDPHVHHSTH. Residues 260-282 form a C2H2-type 2; degenerate zinc finger; sequence YKCDQYGKNFSQSQDLIVHCKTH. 9 C2H2-type zinc fingers span residues 316–338, 344–366, 372–394, 400–422, 428–450, 456–478, 484–506, 512–534, and 540–562; these read YKCKECGKGFRRSSSLHNHHRVH, YKCDECGKGFGFRSLLCIHQGVH, YKCEECGKGFDQSSNLLVHQRVH, YKCSECGKCFSSSSVLQVHWRFH, YRCGECGKGFSQCTHLHIHQRVH, YKCNVCGKDFAYSSVLHTHQRVH, YKCEVCGKCFSYSSYFHLHQRDH, YKCDECGKGFSRNSDLNVHLRVH, and YKCKACGKGFSRNSYLLAHQRVH.

This sequence belongs to the krueppel C2H2-type zinc-finger protein family.

The protein localises to the nucleus. In terms of biological role, may be involved in transcriptional regulation. In Homo sapiens (Human), this protein is Zinc finger protein 285 (ZNF285).